The following is a 140-amino-acid chain: Small ribosomal subunit protein uS12 (140 aa).

Residues 1 to 44 form a disordered region; sequence MPTFNQLVRKGRKTMEKNSQAPALQKGFNSLRKKTTDASAPQKR. At Asp102 the chain carries 3-methylthioaspartic acid. Positions 120–140 are disordered; sequence VAKRRQARSKYGAKRPKEAKK. The span at 121–140 shows a compositional bias: basic residues; the sequence is AKRRQARSKYGAKRPKEAKK.

It belongs to the universal ribosomal protein uS12 family. Part of the 30S ribosomal subunit. Contacts proteins S8 and S17. May interact with IF1 in the 30S initiation complex.

In terms of biological role, with S4 and S5 plays an important role in translational accuracy. Its function is as follows. Interacts with and stabilizes bases of the 16S rRNA that are involved in tRNA selection in the A site and with the mRNA backbone. Located at the interface of the 30S and 50S subunits, it traverses the body of the 30S subunit contacting proteins on the other side and probably holding the rRNA structure together. The combined cluster of proteins S8, S12 and S17 appears to hold together the shoulder and platform of the 30S subunit. The sequence is that of Small ribosomal subunit protein uS12 from Lachnoclostridium phytofermentans (strain ATCC 700394 / DSM 18823 / ISDg) (Clostridium phytofermentans).